The following is a 368-amino-acid chain: Forkhead box protein I2 (368 aa).

Positions 33 to 54 (QNQQLPQRPAAPPALGYGRNEY) are disordered. The fork-head DNA-binding region spans 124 to 218 (RPPYSYSSLI…DNGNFRRKRK (95 aa)). The interval 243 to 272 (SLGSDSPRGASALEQSSYGTPESKSRPAGG) is disordered. Positions 255 to 264 (LEQSSYGTPE) are enriched in polar residues.

It localises to the nucleus. Possible transcriptional activator. This is Forkhead box protein I2 from Xenopus tropicalis (Western clawed frog).